The primary structure comprises 198 residues: Recombination protein RecR (198 aa).

Residues 57 to 72 (CSVCGHITDQDPCYIC) form a C4-type zinc finger. The 96-residue stretch at 80 to 175 (SVICVVQDPK…KLSRIAHGLP (96 aa)) folds into the Toprim domain.

Belongs to the RecR family.

In terms of biological role, may play a role in DNA repair. It seems to be involved in an RecBC-independent recombinational process of DNA repair. It may act with RecF and RecO. The protein is Recombination protein RecR of Bacillus pumilus (strain SAFR-032).